We begin with the raw amino-acid sequence, 371 residues long: tRNA-specific 2-thiouridylase MnmA (371 aa).

ATP-binding positions include 13–20 and methionine 39; that span reads GMSGGVDS. Positions 99 to 101 are interaction with target base in tRNA; it reads NPD. The active-site Nucleophile is cysteine 104. Residues cysteine 104 and cysteine 200 are joined by a disulfide bond. Glycine 128 lines the ATP pocket. The tract at residues 150 to 152 is interaction with tRNA; it reads KDQ. Cysteine 200 (cysteine persulfide intermediate) is an active-site residue. The interval 308-309 is interaction with tRNA; the sequence is RY.

It belongs to the MnmA/TRMU family.

The protein resides in the cytoplasm. It catalyses the reaction S-sulfanyl-L-cysteinyl-[protein] + uridine(34) in tRNA + AH2 + ATP = 2-thiouridine(34) in tRNA + L-cysteinyl-[protein] + A + AMP + diphosphate + H(+). Functionally, catalyzes the 2-thiolation of uridine at the wobble position (U34) of tRNA, leading to the formation of s(2)U34. The sequence is that of tRNA-specific 2-thiouridylase MnmA from Listeria welshimeri serovar 6b (strain ATCC 35897 / DSM 20650 / CCUG 15529 / CIP 8149 / NCTC 11857 / SLCC 5334 / V8).